A 137-amino-acid polypeptide reads, in one-letter code: Large-conductance mechanosensitive channel (137 aa).

A run of 3 helical transmembrane segments spans residues 15–35 (VDLA…NSIV), 38–58 (IIMP…MFIQ), and 80–100 (GNFV…FLVV).

The protein belongs to the MscL family. As to quaternary structure, homopentamer.

It is found in the cell inner membrane. Its function is as follows. Channel that opens in response to stretch forces in the membrane lipid bilayer. May participate in the regulation of osmotic pressure changes within the cell. This is Large-conductance mechanosensitive channel from Brucella anthropi (strain ATCC 49188 / DSM 6882 / CCUG 24695 / JCM 21032 / LMG 3331 / NBRC 15819 / NCTC 12168 / Alc 37) (Ochrobactrum anthropi).